The chain runs to 752 residues: Probable cell surface ferric reductase kap2 (752 aa).

Residues 40-60 (GKYGLGWVYFSVILLAISTII) traverse the membrane as a helical segment. 2 N-linked (GlcNAc...) asparagine glycosylation sites follow: Asn-118 and Asn-133. A run of 2 helical transmembrane segments spans residues 157 to 177 (IGFPSLGASSIILAALIFVTL) and 195 to 215 (PPLAIRAGMIAVAMIPWIIAL). In terms of domain architecture, Ferric oxidoreductase spans 201–348 (AGMIAVAMIP…WATVAIWMLS (148 aa)). 2 residues coordinate heme: His-237 and His-251. The next 3 membrane-spanning stretches (helical) occupy residues 241–261 (GYLCLFLSLIHMVPFYVTPIW), 281–301 (GTGWAALVPLIVLCLHSLPIL), and 306–326 (YELFKLVHLPLSIIFLAMIFW). Heme contacts are provided by His-313 and His-327. A helical membrane pass occupies residues 331–351 (FLASWDYLWATVAIWMLSYAV). In terms of domain architecture, FAD-binding FR-type spans 349 to 475 (YAVRLFYVNW…EGPYGGMKRD (127 aa)). The N-linked (GlcNAc...) asparagine glycan is linked to Asn-357. 467-470 (GPYG) is a binding site for NADP(+). The chain crosses the membrane as a helical span at residues 482-502 (VVFFAGGSGITATASHLLNLI). N-linked (GlcNAc...) asparagine glycosylation occurs at Asn-627. 714-715 (CG) serves as a coordination point for NADP(+).

It belongs to the ferric reductase (FRE) family. It depends on FAD as a cofactor. Heme is required as a cofactor.

The protein localises to the cell membrane. The catalysed reaction is 2 a Fe(II)-siderophore + NADP(+) + H(+) = 2 a Fe(III)-siderophore + NADPH. Probable cell surface ferric reductase that acts as a negative regulatory factor of growth and development. Involved in kojic acid production through the regulation of kojA expression. This chain is Probable cell surface ferric reductase kap2, found in Aspergillus oryzae (strain ATCC 42149 / RIB 40) (Yellow koji mold).